The primary structure comprises 57 residues: Large ribosomal subunit protein bL32 (57 aa).

Belongs to the bacterial ribosomal protein bL32 family.

The chain is Large ribosomal subunit protein bL32 from Lysinibacillus sphaericus (strain C3-41).